We begin with the raw amino-acid sequence, 802 residues long: Chromosome alignment-maintaining phosphoprotein 1 (802 aa).

Met1 carries the post-translational modification N-acetylmethionine. Basic and acidic residues predominate over residues 88–105 (SDKWSEQPKEQPSKDTES). A disordered region spans residues 88–475 (SDKWSEQPKE…PDLWKSSFIM (388 aa)). Ser108 bears the Phosphoserine mark. Residues 135–148 (QKTSPSLCPESQAS) show a composition bias toward polar residues. The span at 185–203 (ERVDPPCELPELEKPERGP) shows a compositional bias: basic and acidic residues. 15 positions are modified to phosphoserine: Ser204, Ser207, Ser234, Ser237, Ser243, Ser252, Ser254, Ser265, Ser272, Ser276, Ser298, Ser309, Ser334, Ser345, and Ser365. The interval 261 to 479 (ARTASPEPRK…KSSFIMESQK (219 aa)) is mediates interaction with MAD2L2. Pro residues predominate over residues 332–351 (PMSPGPWKPIPSVSPGPWKP). Residues 354–368 (SMSTASWKSSVSSGS) are compositionally biased toward low complexity. A compositionally biased stretch (polar residues) spans 369 to 378 (WKTPPTSPES). At Thr371 the chain carries Phosphothreonine. Phosphoserine is present on residues Ser375, Ser394, Ser405, Ser416, Ser421, Ser425, Ser432, Ser434, and Ser441. Residues 440 to 580 (VSPDQRKTSP…EIQLEAVDNA (141 aa)) are mediates localization to the spindle and the kinetochore and is required for the attachment of spindle microtubules to the kinetochore. Thr447 is modified (phosphothreonine). Phosphoserine is present on residues Ser448, Ser451, and Ser461. At Lys479 the chain carries N6-acetyllysine; alternate. A Glycyl lysine isopeptide (Lys-Gly) (interchain with G-Cter in SUMO2); alternate cross-link involves residue Lys479. A phosphoserine mark is found at Ser497, Ser502, and Ser532. Lys555 is covalently cross-linked (Glycyl lysine isopeptide (Lys-Gly) (interchain with G-Cter in SUMO2)). The tract at residues 581-802 (KCDSLAQEGL…LESPLEEQQI (222 aa)) is mediates localization to the chromosome and the spindle and negatively regulates chromosome alignment. Thr593 carries the post-translational modification Phosphothreonine. Lys596 participates in a covalent cross-link: Glycyl lysine isopeptide (Lys-Gly) (interchain with G-Cter in SUMO2). Ser603, Ser605, Ser617, Ser622, Ser641, Ser642, and Ser643 each carry phosphoserine. Residues 603-625 (SPSSKKLKKDSQENSDAELSSSE) form a disordered region. Lys660 participates in a covalent cross-link: Glycyl lysine isopeptide (Lys-Gly) (interchain with G-Cter in SUMO2). Phosphoserine is present on Ser665. Residue Lys679 forms a Glycyl lysine isopeptide (Lys-Gly) (interchain with G-Cter in SUMO2) linkage. Ser726 is subject to Phosphoserine. Residues 728-750 (YKCTICGKAFLLESLLKNHVAAH) form a C2H2-type zinc finger.

In terms of assembly, interacts with MAD2L2. Interacts with POGZ, CBX1, CBX3 and CBX5. Phosphorylated by CDK1. Mitotic phosphorylation is required for the attachment of spindle microtubules to the kinetochore.

The protein localises to the nucleus. It is found in the chromosome. The protein resides in the centromere. It localises to the kinetochore. Its subcellular location is the cytoplasm. The protein localises to the cytoskeleton. It is found in the spindle. Functionally, required for proper alignment of chromosomes at metaphase and their accurate segregation during mitosis. Involved in the maintenance of spindle microtubules attachment to the kinetochore during sister chromatid biorientation. May recruit CENPE and CENPF to the kinetochore. This is Chromosome alignment-maintaining phosphoprotein 1 (Champ1) from Mus musculus (Mouse).